A 249-amino-acid polypeptide reads, in one-letter code: 5'-nucleotidase SurE (249 aa).

Residues Asp-8, Asp-9, Ser-39, and Asn-91 each coordinate a divalent metal cation.

The protein belongs to the SurE nucleotidase family. The cofactor is a divalent metal cation.

The protein localises to the cytoplasm. It carries out the reaction a ribonucleoside 5'-phosphate + H2O = a ribonucleoside + phosphate. Its function is as follows. Nucleotidase that shows phosphatase activity on nucleoside 5'-monophosphates. The chain is 5'-nucleotidase SurE from Stutzerimonas stutzeri (strain A1501) (Pseudomonas stutzeri).